The primary structure comprises 194 residues: Imidazoleglycerol-phosphate dehydratase (194 aa).

Belongs to the imidazoleglycerol-phosphate dehydratase family.

It is found in the cytoplasm. The enzyme catalyses D-erythro-1-(imidazol-4-yl)glycerol 3-phosphate = 3-(imidazol-4-yl)-2-oxopropyl phosphate + H2O. Its pathway is amino-acid biosynthesis; L-histidine biosynthesis; L-histidine from 5-phospho-alpha-D-ribose 1-diphosphate: step 6/9. This Chlorobaculum tepidum (strain ATCC 49652 / DSM 12025 / NBRC 103806 / TLS) (Chlorobium tepidum) protein is Imidazoleglycerol-phosphate dehydratase.